The sequence spans 533 residues: Protein trichome birefringence-like 18 (533 aa).

Residues 21–41 (VSTVAIAIGGLASFFVFGLLL) form a helical; Signal-anchor for type II membrane protein membrane-spanning segment. A disordered region spans residues 93 to 171 (SDSSSGLPVV…PDDVSETASA (79 aa)). The span at 113–154 (SSDRKLETPLTQEKEDLVSSDITEKTDVQSGERETNVSKAED) shows a compositional bias: basic and acidic residues. The GDS motif signature appears at 248–250 (GDS). Positions 475–502 (HDGHPGPFRSPDPNKITKRGPDGRPPPQ) are disordered. A DCXHWCLPGXXDXWN motif motif is present at residues 503–517 (DCLHWCMPGPVDTWN).

Belongs to the PC-esterase family. TBL subfamily.

Its subcellular location is the membrane. Its function is as follows. May act as a bridging protein that binds pectin and other cell wall polysaccharides. Probably involved in maintaining esterification of pectins. May be involved in the specific O-acetylation of cell wall polymers. This Arabidopsis thaliana (Mouse-ear cress) protein is Protein trichome birefringence-like 18 (TBL18).